Consider the following 46-residue polypeptide: Mu-hexatoxin-Mg2a (46 aa).

Disulfide bonds link cysteine 3-cysteine 18, cysteine 10-cysteine 24, cysteine 17-cysteine 36, cysteine 21-cysteine 43, and cysteine 26-cysteine 34.

This sequence belongs to the neurotoxin 02 (plectoxin) family. 02 (plectoxin) subfamily. In terms of tissue distribution, expressed by the venom gland.

The protein resides in the secreted. In terms of biological role, competes for binding at site 3 of the insect voltage-gated sodium channel (Nav). Insecticidal neurotoxin. Causes temporary paralysis to lepidopteran larvae (10.3 nmol/g) or to crickets (doses from 0.93 to 119 ug/g). Is not toxic to mice when injected intracranially (high doses). The protein is Mu-hexatoxin-Mg2a of Macrothele gigas (Japanese funnel web spider).